A 496-amino-acid polypeptide reads, in one-letter code: Glycerol kinase (496 aa).

ADP is bound at residue T12. The ATP site is built by T12, T13, and S14. T12 serves as a coordination point for sn-glycerol 3-phosphate. R16 contributes to the ADP binding site. Sn-glycerol 3-phosphate contacts are provided by R82, E83, and Y134. Glycerol contacts are provided by R82, E83, and Y134. Position 230 is a phosphohistidine; by HPr (H230). Residue D244 participates in sn-glycerol 3-phosphate binding. Positions 244 and 245 each coordinate glycerol. Residues T266 and G309 each contribute to the ADP site. The ATP site is built by T266, G309, Q313, and G410. ADP is bound by residues G410 and N414.

The protein belongs to the FGGY kinase family. Homotetramer and homodimer (in equilibrium). In terms of processing, the phosphoenolpyruvate-dependent sugar phosphotransferase system (PTS), including enzyme I, and histidine-containing protein (HPr) are required for the phosphorylation, which leads to the activation of the enzyme.

The enzyme catalyses glycerol + ATP = sn-glycerol 3-phosphate + ADP + H(+). It functions in the pathway polyol metabolism; glycerol degradation via glycerol kinase pathway; sn-glycerol 3-phosphate from glycerol: step 1/1. Activated by phosphorylation and inhibited by fructose 1,6-bisphosphate (FBP). Functionally, key enzyme in the regulation of glycerol uptake and metabolism. Catalyzes the phosphorylation of glycerol to yield sn-glycerol 3-phosphate. The chain is Glycerol kinase from Geobacillus sp. (strain WCH70).